Consider the following 394-residue polypeptide: Phosphopentomutase (394 aa).

D15, D288, H293, D329, H330, and H341 together coordinate Mn(2+).

Belongs to the phosphopentomutase family. The cofactor is Mn(2+).

It localises to the cytoplasm. The enzyme catalyses 2-deoxy-alpha-D-ribose 1-phosphate = 2-deoxy-D-ribose 5-phosphate. The catalysed reaction is alpha-D-ribose 1-phosphate = D-ribose 5-phosphate. It participates in carbohydrate degradation; 2-deoxy-D-ribose 1-phosphate degradation; D-glyceraldehyde 3-phosphate and acetaldehyde from 2-deoxy-alpha-D-ribose 1-phosphate: step 1/2. Isomerase that catalyzes the conversion of deoxy-ribose 1-phosphate (dRib-1-P) and ribose 1-phosphate (Rib-1-P) to deoxy-ribose 5-phosphate (dRib-5-P) and ribose 5-phosphate (Rib-5-P), respectively. This is Phosphopentomutase (drm) from Bacillus subtilis (strain 168).